The primary structure comprises 190 residues: dCTP deaminase (190 aa).

113–118 contributes to the dCTP binding site; that stretch reads KSTYAR. E139 functions as the Proton donor/acceptor in the catalytic mechanism. Residues Q158, Y172, K181, and Q182 each coordinate dCTP.

It belongs to the dCTP deaminase family. In terms of assembly, homotrimer.

It catalyses the reaction dCTP + H2O + H(+) = dUTP + NH4(+). Its pathway is pyrimidine metabolism; dUMP biosynthesis; dUMP from dCTP (dUTP route): step 1/2. Its function is as follows. Catalyzes the deamination of dCTP to dUTP. In Chlamydia trachomatis serovar A (strain ATCC VR-571B / DSM 19440 / HAR-13), this protein is dCTP deaminase.